Reading from the N-terminus, the 239-residue chain is Transcriptional regulatory protein BtsR (239 aa).

Residues Lys-3–Arg-116 form the Response regulatory domain. A 4-aspartylphosphate modification is found at Asp-54. The region spanning Ile-137 to Leu-239 is the HTH LytTR-type domain.

Phosphorylated by BtsS.

Its function is as follows. Member of the two-component regulatory system BtsS/BtsR. BtsR regulates expression of btsT by binding to its promoter region. The protein is Transcriptional regulatory protein BtsR of Salmonella typhi.